The chain runs to 310 residues: Oxygen-dependent coproporphyrinogen-III oxidase (310 aa).

Serine 97 is a binding site for substrate. A divalent metal cation contacts are provided by histidine 101 and histidine 111. The Proton donor role is filled by histidine 111. 113 to 115 (NFR) is a binding site for substrate. A divalent metal cation is bound by residues histidine 150 and histidine 180. Positions 245–280 (YVEFNLLYDRGTRFGLEFGGRTESILMSLPPRVVWR) are important for dimerization. Residue 263 to 265 (GGR) participates in substrate binding.

This sequence belongs to the aerobic coproporphyrinogen-III oxidase family. As to quaternary structure, homodimer. Requires a divalent metal cation as cofactor.

The protein localises to the cytoplasm. It carries out the reaction coproporphyrinogen III + O2 + 2 H(+) = protoporphyrinogen IX + 2 CO2 + 2 H2O. Its pathway is porphyrin-containing compound metabolism; protoporphyrin-IX biosynthesis; protoporphyrinogen-IX from coproporphyrinogen-III (O2 route): step 1/1. Functionally, involved in the heme biosynthesis. Catalyzes the aerobic oxidative decarboxylation of propionate groups of rings A and B of coproporphyrinogen-III to yield the vinyl groups in protoporphyrinogen-IX. The chain is Oxygen-dependent coproporphyrinogen-III oxidase from Coxiella burnetii (strain RSA 331 / Henzerling II).